The primary structure comprises 165 residues: Large ribosomal subunit protein uL10 (165 aa).

The protein belongs to the universal ribosomal protein uL10 family. In terms of assembly, part of the ribosomal stalk of the 50S ribosomal subunit. The N-terminus interacts with L11 and the large rRNA to form the base of the stalk. The C-terminus forms an elongated spine to which L12 dimers bind in a sequential fashion forming a multimeric L10(L12)X complex.

Its function is as follows. Forms part of the ribosomal stalk, playing a central role in the interaction of the ribosome with GTP-bound translation factors. This Deinococcus deserti (strain DSM 17065 / CIP 109153 / LMG 22923 / VCD115) protein is Large ribosomal subunit protein uL10.